Consider the following 288-residue polypeptide: Shikimate kinase (288 aa).

81–91 (PVASGLKSSSA) lines the ATP pocket.

The protein belongs to the GHMP kinase family. Archaeal shikimate kinase subfamily.

It is found in the cytoplasm. It catalyses the reaction shikimate + ATP = 3-phosphoshikimate + ADP + H(+). The protein operates within metabolic intermediate biosynthesis; chorismate biosynthesis; chorismate from D-erythrose 4-phosphate and phosphoenolpyruvate: step 5/7. This chain is Shikimate kinase, found in Methanothrix thermoacetophila (strain DSM 6194 / JCM 14653 / NBRC 101360 / PT) (Methanosaeta thermophila).